Consider the following 336-residue polypeptide: Ketol-acid reductoisomerase (NADP(+)) (336 aa).

The region spanning 1–182 (MAVIYYDKDA…GVTRAGVIET (182 aa)) is the KARI N-terminal Rossmann domain. NADP(+) contacts are provided by residues 25–28 (YGSQ), Arg-48, Ser-51, Ser-53, and 83–86 (DENQ). His-108 is a catalytic residue. Gly-134 provides a ligand contact to NADP(+). Residues 183–328 (TFKEETETDL…KELRKMMPWL (146 aa)) form the KARI C-terminal knotted domain. Mg(2+)-binding residues include Asp-191, Glu-195, Glu-227, and Glu-231. Ser-252 contributes to the substrate binding site.

This sequence belongs to the ketol-acid reductoisomerase family. The cofactor is Mg(2+).

It carries out the reaction (2R)-2,3-dihydroxy-3-methylbutanoate + NADP(+) = (2S)-2-acetolactate + NADPH + H(+). The enzyme catalyses (2R,3R)-2,3-dihydroxy-3-methylpentanoate + NADP(+) = (S)-2-ethyl-2-hydroxy-3-oxobutanoate + NADPH + H(+). The protein operates within amino-acid biosynthesis; L-isoleucine biosynthesis; L-isoleucine from 2-oxobutanoate: step 2/4. It participates in amino-acid biosynthesis; L-valine biosynthesis; L-valine from pyruvate: step 2/4. Functionally, involved in the biosynthesis of branched-chain amino acids (BCAA). Catalyzes an alkyl-migration followed by a ketol-acid reduction of (S)-2-acetolactate (S2AL) to yield (R)-2,3-dihydroxy-isovalerate. In the isomerase reaction, S2AL is rearranged via a Mg-dependent methyl migration to produce 3-hydroxy-3-methyl-2-ketobutyrate (HMKB). In the reductase reaction, this 2-ketoacid undergoes a metal-dependent reduction by NADPH to yield (R)-2,3-dihydroxy-isovalerate. The chain is Ketol-acid reductoisomerase (NADP(+)) from Thermotoga petrophila (strain ATCC BAA-488 / DSM 13995 / JCM 10881 / RKU-1).